The following is a 122-amino-acid chain: Large ribosomal subunit protein uL14 (122 aa).

This sequence belongs to the universal ribosomal protein uL14 family. As to quaternary structure, part of the 50S ribosomal subunit. Forms a cluster with proteins L3 and L19. In the 70S ribosome, L14 and L19 interact and together make contacts with the 16S rRNA in bridges B5 and B8.

Its function is as follows. Binds to 23S rRNA. Forms part of two intersubunit bridges in the 70S ribosome. This chain is Large ribosomal subunit protein uL14, found in Chlorobaculum parvum (strain DSM 263 / NCIMB 8327) (Chlorobium vibrioforme subsp. thiosulfatophilum).